We begin with the raw amino-acid sequence, 205 residues long: Ribonuclease HII (205 aa).

The region spanning 15 to 205 (SQVCGIDEAG…SFKLRKLGEK (191 aa)) is the RNase H type-2 domain. Positions 21, 22, and 117 each coordinate a divalent metal cation.

The protein belongs to the RNase HII family. The cofactor is Mn(2+). Mg(2+) is required as a cofactor.

Its subcellular location is the cytoplasm. The enzyme catalyses Endonucleolytic cleavage to 5'-phosphomonoester.. Functionally, endonuclease that specifically degrades the RNA of RNA-DNA hybrids. The polypeptide is Ribonuclease HII (Chlorobaculum tepidum (strain ATCC 49652 / DSM 12025 / NBRC 103806 / TLS) (Chlorobium tepidum)).